The chain runs to 352 residues: Transcription factor MYB51 (352 aa).

HTH myb-type domains follow at residues 10–62 (ELGL…ANYL) and 63–117 (RPDI…KKRL). 2 DNA-binding regions (H-T-H motif) span residues 38 to 62 (WRTL…ANYL) and 90 to 113 (WSAI…NTHI). Disordered stretches follow at residues 128-157 (KGIT…DLDN) and 198-219 (GGPL…SVDS). Over residues 203–219 (STSHTTNTTTTSVSVDS) the composition is skewed to low complexity.

As to quaternary structure, can form complexes with MYC2, MYC3 or MYC4. As to expression, expressed in vegetative parts of the plant, mainly in mature rosette leaves and in trichomes. Detected in roots, but not in mature flowers or siliques.

The protein resides in the nucleus. In terms of biological role, transcription factor positively regulating indolic glucosinolate biosynthetic pathway genes. The chain is Transcription factor MYB51 (MYB51) from Arabidopsis thaliana (Mouse-ear cress).